The sequence spans 144 residues: Small polypeptide DEVIL 15 (144 aa).

The N-linked (GlcNAc...) asparagine glycan is linked to N8. A disordered region spans residues 22–63; it reads SSSSKPFFTRSFSTKTSSSPSSKSHFTRSFSTKPSSSSSSSD. The chain crosses the membrane as a helical span at residues 104–120; the sequence is ILSKKGASVTGKCFKVA. The required for DVL/RTFL small polypeptide activity stretch occupies residues 111 to 142; sequence SVTGKCFKVAKEHKSRFYIIKRCVLMLVCWHK.

This sequence belongs to the DVL/RTFL small polypeptides family.

The protein resides in the cell membrane. Small polypeptide acting as a regulatory molecule which coordinates cellular responses required for differentiation, growth and development, probably by restricting polar cell proliferation in lateral organs and coordinating socket cell recruitment and differentiation at trichome sites. The sequence is that of Small polypeptide DEVIL 15 from Arabidopsis thaliana (Mouse-ear cress).